The sequence spans 82 residues: Sulfur carrier protein TusA (82 aa).

Cysteine 17 acts as the Cysteine persulfide intermediate in catalysis.

Belongs to the sulfur carrier protein TusA family.

The protein resides in the cytoplasm. Sulfur carrier protein which probably makes part of a sulfur-relay system. The sequence is that of Sulfur carrier protein TusA from Glaesserella parasuis serovar 5 (strain SH0165) (Haemophilus parasuis).